The sequence spans 193 residues: CASP-like protein 2U1 (193 aa).

Residues 1–18 (MAMALALGGGQDAERKVK) are Cytoplasmic-facing. Residues 19–39 (VAEVALRALLCGLGALAAALV) traverse the membrane as a helical segment. The Extracellular segment spans residues 40–61 (ATDTQTRTFFSLQKKASYTDMK). Residues 62–82 (AMVFLVDAAAVAAGYSLLQLA) form a helical membrane-spanning segment. Residues 83–113 (ARCCGGGAMSSGRGDGGGRGRALSWCVFSCD) lie on the Cytoplasmic side of the membrane. A helical membrane pass occupies residues 114-134 (QALAYVLLAAVAAALQASVVA). The Extracellular portion of the chain corresponds to 135–156 (KRGQPELQWMGICALYGAFCRQ). Residues 157–177 (AGAGLATAVVAGLAAVLLAFL) form a helical membrane-spanning segment. Residues 178–193 (SAFNLFRLYGSGGTKS) lie on the Cytoplasmic side of the membrane.

This sequence belongs to the Casparian strip membrane proteins (CASP) family. As to quaternary structure, homodimer and heterodimers.

It localises to the cell membrane. The protein is CASP-like protein 2U1 of Sorghum bicolor (Sorghum).